The primary structure comprises 262 residues: Ribosomal RNA small subunit methyltransferase A (262 aa).

Positions 18, 43, 65, 91, and 110 each coordinate S-adenosyl-L-methionine.

This sequence belongs to the class I-like SAM-binding methyltransferase superfamily. rRNA adenine N(6)-methyltransferase family. RsmA subfamily.

The protein resides in the cytoplasm. It catalyses the reaction adenosine(1518)/adenosine(1519) in 16S rRNA + 4 S-adenosyl-L-methionine = N(6)-dimethyladenosine(1518)/N(6)-dimethyladenosine(1519) in 16S rRNA + 4 S-adenosyl-L-homocysteine + 4 H(+). In terms of biological role, specifically dimethylates two adjacent adenosines (A1518 and A1519) in the loop of a conserved hairpin near the 3'-end of 16S rRNA in the 30S particle. May play a critical role in biogenesis of 30S subunits. The sequence is that of Ribosomal RNA small subunit methyltransferase A from Ehrlichia ruminantium (strain Gardel).